The following is a 570-amino-acid chain: A-type ATP synthase subunit A (570 aa).

Residue 223–230 (GPFGSGKT) participates in ATP binding.

The protein belongs to the ATPase alpha/beta chains family. Has multiple subunits with at least A(3), B(3), C, D, E, F, H, I and proteolipid K(x).

It localises to the cell membrane. It carries out the reaction ATP + H2O + 4 H(+)(in) = ADP + phosphate + 5 H(+)(out). Its function is as follows. Component of the A-type ATP synthase that produces ATP from ADP in the presence of a proton gradient across the membrane. The A chain is the catalytic subunit. The polypeptide is A-type ATP synthase subunit A (Nanoarchaeum equitans (strain Kin4-M)).